The chain runs to 84 residues: MAACTAQVLSLYRKLMKESNKFPSYNYRTYALRRVQDAFRANRSVEDPKMVEQLLNQGRDNLDMIRRQVAIGKMYPTQKTIVEG.

It belongs to the complex I LYR family.

The sequence is that of LYR motif-containing protein 4B (lyrm4b) from Salmo salar (Atlantic salmon).